The chain runs to 2059 residues: Desmoplakin-A (2059 aa).

Positions 1 to 11 are enriched in polar residues; the sequence is MSLSGSQTRLH. Residues 1-25 form a disordered region; sequence MSLSGSQTRLHQISRRSSSRPDLTA. Coiled coils occupy residues 320 to 354 and 397 to 453; these read IPQK…LLKN and FKEA…VQTL. The tract at residues 665 to 690 is disordered; the sequence is EVSSGKTATGVSSGKTATGVSSGKTS. Low complexity predominate over residues 671–690; that stretch reads TATGVSSGKTATGVSSGKTS. 2 coiled-coil regions span residues 1062-1229 and 1261-1383; these read MEEL…AELE and LQQD…LQQR. Plectin repeat units lie at residues 1450-1488, 1489-1526, 1564-1602, 1666-1694, 1847-1885, and 1923-1961; these read YLGG…TLEL, LEAQ…KDKL, LLEA…NEIL, IVDP…FLEL, LLEA…SVKL, and FLEF…AQKL. Residues 2008–2059 form a disordered region; that stretch reads KGISSPYNVSSGPSSRSGSRAGSRTGSRSGSRRGSVDYSSSSVSYTFFSSAS. A compositionally biased stretch (low complexity) spans 2011 to 2059; that stretch reads SSPYNVSSGPSSRSGSRAGSRTGSRSGSRRGSVDYSSSSVSYTFFSSAS.

The protein belongs to the plakin or cytolinker family.

The protein resides in the cell junction. Its subcellular location is the desmosome. It localises to the cell membrane. Involved in the organization of desmosome cell-cell junctions. Of particular importance in cell adhesion in the skin and during cardiac development. May also play a role in the regulation of Wnt, TGF-beta and Hippo signaling pathways. This chain is Desmoplakin-A, found in Danio rerio (Zebrafish).